The chain runs to 189 residues: uncharacterized protein (189 aa).

The signal sequence occupies residues 1 to 23; that stretch reads MVPPKPALWALLLALLGTAPSRA. Asn72 is a glycosylation site (N-linked (GlcNAc...) asparagine).

This is an uncharacterized protein from Homo sapiens (Human).